A 78-amino-acid chain; its full sequence is MAESTTTCFLLLVTGYVTAVMSEEAHLRSRRDFGCGQGMIFMCQRRCMRLYPGSTGFCRGFRCMCDTHIPLRPPFMVG.

Positions 1-22 are cleaved as a signal peptide; sequence MAESTTTCFLLLVTGYVTAVMS. The propeptide occupies 23–29; sequence EEAHLRS. Intrachain disulfides connect Cys-35-Cys-58, Cys-43-Cys-63, and Cys-47-Cys-65.

In terms of tissue distribution, salivary glands (at protein level).

It is found in the secreted. Functionally, has antibacterial activity against the Gram-positive bacteria S.aureus ATCC2592 (MIC=0.8 ug/ml), S.aureus 6A (MIC=0.8 ug/ml) and S.aureus 15A (MIC=1.6 ug/ml), and against the Gram-negative bacteria E.coli ATCC 25922 (MIC=3.2 ug/ml), E.coli 23A (MIC=6.4 ug/ml), E.coli 27A (MIC=6.4 ug/ml), P.aeruginosa 3A (MIC=3.2 ug/ml), P.aeruginosa 7A (MIC=0.8 ug/ml) and H.pylori NCTC11637 (MIC=6.4 ug/ml). Has antifungal activity against C.albidus ATCC2002 (MIC=25.6 ug/ml). Very low hemolytic activity against rabbit erythrocytes. This Haemaphysalis longicornis (Bush tick) protein is Longicornsin.